The primary structure comprises 268 residues: uncharacterized protein (268 aa).

An RING-type; degenerate zinc finger spans residues Cys21–Lys61.

The protein resides in the mitochondrion. It is found in the nucleus. This is an uncharacterized protein from Schizosaccharomyces pombe (strain 972 / ATCC 24843) (Fission yeast).